The following is a 68-amino-acid chain: Serine palmitoyltransferase small subunit A (68 aa).

Residues 1–9 (MALARAWKQ) are Cytoplasmic-facing. The chain crosses the membrane as a helical span at residues 10 to 26 (MSWFYYQYLLVTALYML). At 27–31 (EPWER) the chain is on the lumenal side. A helical transmembrane segment spans residues 32–54 (TVFNSMLVSIVGMALYTGYVFMP). The Cytoplasmic segment spans residues 55 to 68 (QHIMAILHYFEIVQ).

This sequence belongs to the SPTSS family. SPTSSA subfamily. As to quaternary structure, component of the serine palmitoyltransferase (SPT) complex, which is composed of SPTLC1, SPTLC2 or SPTLC3 and SPTSSA or SPTSSB. The heterodimer consisting of SPTLC1 and SPTLC2/SPTLC3 forms the catalytic core of the enzyme, while SPTSSA or SPTSSB subunits determine substrate specificity. SPT also interacts with ORMDL proteins, especially ORMDL3, which negatively regulate SPT activity in the presence of ceramides. Interacts with MBOAT7; the interaction plays a role in MBOAT7 localization to mitochondria-associated membranes.

It is found in the endoplasmic reticulum membrane. It functions in the pathway lipid metabolism; sphingolipid metabolism. Functionally, component of the serine palmitoyltransferase multisubunit enzyme (SPT) that catalyzes the initial and rate-limiting step in sphingolipid biosynthesis by condensing L-serine and activated acyl-CoA (most commonly palmitoyl-CoA) to form long-chain bases. The SPT complex is composed of SPTLC1, SPTLC2 or SPTLC3 and SPTSSA or SPTSSB. Within this complex, the heterodimer consisting of SPTLC1 and SPTLC2/SPTLC3 forms the catalytic core. Within the SPT complex, SPTSSA stimulates the catalytic activity and plays a role in substrate specificity, which depends upon the overall complex composition. The SPTLC1-SPTLC2-SPTSSA complex shows a strong preference for C16-CoA substrate, while the SPTLC1-SPTLC3-SPTSSA isozyme uses both C14-CoA and C16-CoA as substrates, with a slight preference for C14-CoA. Independently of its action as a SPT component, may be involved in MBOAT7 localization to mitochondria-associated membranes, a membrane bridge between the endoplasmic reticulum and mitochondria, may hence affect MBOAT7-catalyzed incorporation of arachidonic acid into phosphatidylinositol. In Bos taurus (Bovine), this protein is Serine palmitoyltransferase small subunit A (SPTSSA).